A 310-amino-acid chain; its full sequence is Porphobilinogen deaminase (310 aa).

At Cys-242 the chain carries S-(dipyrrolylmethanemethyl)cysteine.

It belongs to the HMBS family. In terms of assembly, monomer. Dipyrromethane is required as a cofactor.

It catalyses the reaction 4 porphobilinogen + H2O = hydroxymethylbilane + 4 NH4(+). It participates in porphyrin-containing compound metabolism; protoporphyrin-IX biosynthesis; coproporphyrinogen-III from 5-aminolevulinate: step 2/4. Functionally, tetrapolymerization of the monopyrrole PBG into the hydroxymethylbilane pre-uroporphyrinogen in several discrete steps. The protein is Porphobilinogen deaminase of Shewanella baltica (strain OS155 / ATCC BAA-1091).